We begin with the raw amino-acid sequence, 423 residues long: D-tagatose-1,6-bisphosphate aldolase subunit GatZ (423 aa).

Belongs to the GatZ/KbaZ family. GatZ subfamily. In terms of assembly, forms a complex with GatY.

It functions in the pathway carbohydrate metabolism; D-tagatose 6-phosphate degradation; D-glyceraldehyde 3-phosphate and glycerone phosphate from D-tagatose 6-phosphate: step 2/2. Functionally, component of the tagatose-1,6-bisphosphate aldolase GatYZ that is required for full activity and stability of the Y subunit. Could have a chaperone-like function for the proper and stable folding of GatY. When expressed alone, GatZ does not show any aldolase activity. Is involved in the catabolism of galactitol. In Salmonella dublin (strain CT_02021853), this protein is D-tagatose-1,6-bisphosphate aldolase subunit GatZ.